The primary structure comprises 607 residues: Glutamine--fructose-6-phosphate aminotransferase [isomerizing] (607 aa).

C2 serves as the catalytic Nucleophile; for GATase activity. The 216-residue stretch at 2 to 217 (CGIIGILGKR…DGDWAVLTRE (216 aa)) folds into the Glutamine amidotransferase type-2 domain. SIS domains lie at 277 to 422 (TVRS…QRGF) and 455 to 597 (ICRN…VDQP). The active-site For Fru-6P isomerization activity is K602.

In terms of assembly, homodimer.

Its subcellular location is the cytoplasm. It catalyses the reaction D-fructose 6-phosphate + L-glutamine = D-glucosamine 6-phosphate + L-glutamate. Catalyzes the first step in hexosamine metabolism, converting fructose-6P into glucosamine-6P using glutamine as a nitrogen source. The sequence is that of Glutamine--fructose-6-phosphate aminotransferase [isomerizing] from Bartonella henselae (strain ATCC 49882 / DSM 28221 / CCUG 30454 / Houston 1) (Rochalimaea henselae).